A 336-amino-acid polypeptide reads, in one-letter code: Glycerol-3-phosphate dehydrogenase [NAD(P)+] (336 aa).

Positions 16, 17, 37, and 111 each coordinate NADPH. 3 residues coordinate sn-glycerol 3-phosphate: K111, G140, and T142. A144 provides a ligand contact to NADPH. The sn-glycerol 3-phosphate site is built by K196, D249, S259, R260, and N261. K196 serves as the catalytic Proton acceptor. Position 260 (R260) interacts with NADPH. The NADPH site is built by V284 and E286.

Belongs to the NAD-dependent glycerol-3-phosphate dehydrogenase family.

Its subcellular location is the cytoplasm. It carries out the reaction sn-glycerol 3-phosphate + NAD(+) = dihydroxyacetone phosphate + NADH + H(+). It catalyses the reaction sn-glycerol 3-phosphate + NADP(+) = dihydroxyacetone phosphate + NADPH + H(+). It participates in membrane lipid metabolism; glycerophospholipid metabolism. Its function is as follows. Catalyzes the reduction of the glycolytic intermediate dihydroxyacetone phosphate (DHAP) to sn-glycerol 3-phosphate (G3P), the key precursor for phospholipid synthesis. The polypeptide is Glycerol-3-phosphate dehydrogenase [NAD(P)+] (Glaesserella parasuis serovar 5 (strain SH0165) (Haemophilus parasuis)).